The primary structure comprises 511 residues: Apolipoprotein N-acyltransferase (511 aa).

The next 6 membrane-spanning stretches (helical) occupy residues P7 to A25, G58 to H78, F90 to W110, L125 to F145, V163 to V183, and G192 to L212. Positions I230–P470 constitute a CN hydrolase domain. Residue E269 is the Proton acceptor of the active site. Residue K330 is part of the active site. The Nucleophile role is filled by C382. The chain crosses the membrane as a helical span at residues L478 to L498.

This sequence belongs to the CN hydrolase family. Apolipoprotein N-acyltransferase subfamily.

It is found in the cell inner membrane. The catalysed reaction is N-terminal S-1,2-diacyl-sn-glyceryl-L-cysteinyl-[lipoprotein] + a glycerophospholipid = N-acyl-S-1,2-diacyl-sn-glyceryl-L-cysteinyl-[lipoprotein] + a 2-acyl-sn-glycero-3-phospholipid + H(+). Its pathway is protein modification; lipoprotein biosynthesis (N-acyl transfer). Functionally, catalyzes the phospholipid dependent N-acylation of the N-terminal cysteine of apolipoprotein, the last step in lipoprotein maturation. This chain is Apolipoprotein N-acyltransferase, found in Pseudomonas paraeruginosa (strain DSM 24068 / PA7) (Pseudomonas aeruginosa (strain PA7)).